The primary structure comprises 487 residues: Structure-specific endonuclease subunit SLX1 (487 aa).

Residues 27-109 (PFYACYLLRS…QKPELSRHLR (83 aa)) form the GIY-YIG domain. A disordered region spans residues 44-69 (RTYVGSTPDPPRRIRQHNGELKQGAW). The segment at 262–328 (CHLCQERIAF…LPYQGLCPNC (67 aa)) adopts an SLX1-type zinc-finger fold. Positions 359–396 (KAEKAEKAEKAEKAEKAEKAEKAGRKVRQREMKTKKGD) are enriched in basic and acidic residues. 2 disordered regions span residues 359-407 (KAEK…QPES) and 433-475 (PARS…SEPE). Positions 397-407 (QSNGTVAQPES) are enriched in polar residues. Positions 438–455 (KSKDVGGEGIRHSTHTDD) are enriched in basic and acidic residues. The span at 465–475 (ETEDESESEPE) shows a compositional bias: acidic residues.

Belongs to the SLX1 family. Forms a heterodimer with SLX4. The cofactor is a divalent metal cation.

It localises to the nucleus. Functionally, catalytic subunit of the SLX1-SLX4 structure-specific endonuclease that resolves DNA secondary structures generated during DNA repair and recombination. Has endonuclease activity towards branched DNA substrates, introducing single-strand cuts in duplex DNA close to junctions with ss-DNA. The sequence is that of Structure-specific endonuclease subunit SLX1 from Cryptococcus neoformans var. neoformans serotype D (strain B-3501A) (Filobasidiella neoformans).